The sequence spans 402 residues: Protein FAM221B (402 aa).

The span at 1–35 shows a compositional bias: basic and acidic residues; the sequence is MEAHEIIEEPHITMDAEKHPPSKDPSAEDLQENHI. Disordered regions lie at residues 1-205 and 378-402; these read MEAH…TARP and DTQK…HRPL. Composition is skewed to polar residues over residues 77 to 90 and 393 to 402; these read EPSI…TPTY and DTVSNWHRPL.

This sequence belongs to the FAM221 family.

This is Protein FAM221B (FAM221B) from Homo sapiens (Human).